Reading from the N-terminus, the 169-residue chain is MNINTAYFAGGCFWCMTKPFDTFDGIEKVTSGYMGGHIENPTYEQVKSGTSGHLETVEIQYDVALFSYNKLLEIFFSVIDPLDTGGQYQDRGPQYQTAIFYTNDHQKELAETYIEQLKNTINADKAIATKILPASQFYKAEDYHQDFYKKNPERYAEEQKIRQEYKNKQ.

Residue cysteine 12 is part of the active site.

Belongs to the MsrA Met sulfoxide reductase family.

The enzyme catalyses L-methionyl-[protein] + [thioredoxin]-disulfide + H2O = L-methionyl-(S)-S-oxide-[protein] + [thioredoxin]-dithiol. The catalysed reaction is [thioredoxin]-disulfide + L-methionine + H2O = L-methionine (S)-S-oxide + [thioredoxin]-dithiol. In terms of biological role, has an important function as a repair enzyme for proteins that have been inactivated by oxidation. Catalyzes the reversible oxidation-reduction of methionine sulfoxide in proteins to methionine. In Staphylococcus aureus (strain Mu50 / ATCC 700699), this protein is Peptide methionine sulfoxide reductase MsrA 1 (msrA1).